The sequence spans 176 residues: RNA pyrophosphohydrolase (176 aa).

The 144-residue stretch at 6-149 (GYRPNVGIVI…KRDVYRRVMK (144 aa)) folds into the Nudix hydrolase domain. The short motif at 38–59 (GGINPGESAEQAMYRELFEEVG) is the Nudix box element.

It belongs to the Nudix hydrolase family. RppH subfamily. A divalent metal cation serves as cofactor.

In terms of biological role, accelerates the degradation of transcripts by removing pyrophosphate from the 5'-end of triphosphorylated RNA, leading to a more labile monophosphorylated state that can stimulate subsequent ribonuclease cleavage. This Shigella dysenteriae serotype 1 (strain Sd197) protein is RNA pyrophosphohydrolase.